The sequence spans 200 residues: Somatotropin (200 aa).

An N-terminal signal peptide occupies residues 1-22 (MARVLVLLSVVVASLLFSQGAT). H38 contributes to the Zn(2+) binding site. Residues C71 and C173 are joined by a disulfide bond. E182 contacts Zn(2+). An intrachain disulfide couples C190 to C198.

This sequence belongs to the somatotropin/prolactin family.

The protein resides in the secreted. Functionally, growth hormone plays an important role in growth control and is involved in the regulation of several anabolic processes. Implicated as an osmoregulatory substance important for seawater adaptation. In Ictalurus punctatus (Channel catfish), this protein is Somatotropin (gh).